A 143-amino-acid chain; its full sequence is Small ribosomal subunit protein uS11c (143 aa).

The protein belongs to the universal ribosomal protein uS11 family. In terms of assembly, part of the 30S ribosomal subunit.

It is found in the plastid. The protein localises to the chloroplast. This is Small ribosomal subunit protein uS11c from Brachypodium distachyon (Purple false brome).